A 175-amino-acid chain; its full sequence is Large ribosomal subunit protein uL18 (175 aa).

It belongs to the universal ribosomal protein uL18 family. As to quaternary structure, part of the 50S ribosomal subunit. Contacts the 5S and 23S rRNAs.

In terms of biological role, this is one of the proteins that bind and probably mediate the attachment of the 5S RNA into the large ribosomal subunit, where it forms part of the central protuberance. In Methanosphaerula palustris (strain ATCC BAA-1556 / DSM 19958 / E1-9c), this protein is Large ribosomal subunit protein uL18.